A 125-amino-acid chain; its full sequence is MKPGNTSFNMVSFRMVWTAMMATLLVAGASSAGTRSSEDLSAPEDRSLSKRLVFDPSCAGVYDRVLLGKLNRLCDDCYNVFREPNVATECRSNCFYNLAFVQCLEYLMPPSLHEEYQANVQMVGK.

The first 34 residues, M1–T34, serve as a signal peptide directing secretion. 3 cysteine pairs are disulfide-bonded: C58/C94, C74/C90, and C77/C103. Position 123 is a valine amide (V123).

It belongs to the arthropod CHH/MIH/GIH/VIH hormone family. In terms of tissue distribution, produced by the medulla terminalis X-organ in the eyestalks and transported to the sinus gland where they are stored and released.

The protein localises to the secreted. Hormone found in the sinus gland of isopods and decapods which controls the blood sugar level. Has a secretagogue action over the amylase released from the midgut gland. May act as a stress hormone and may be involved in the control of molting and reproduction. This Penaeus japonicus (Kuruma prawn) protein is Crustacean hyperglycemic hormones 5.